A 371-amino-acid chain; its full sequence is tRNA-specific 2-thiouridylase MnmA (371 aa).

ATP is bound by residues 13 to 20 and Met-39; that span reads GMSGGVDS. The interaction with target base in tRNA stretch occupies residues 99–101; that stretch reads NPD. Cys-104 (nucleophile) is an active-site residue. Cys-104 and Cys-200 are oxidised to a cystine. Gly-128 provides a ligand contact to ATP. Residues 150-152 form an interaction with tRNA region; it reads KDQ. Cys-200 serves as the catalytic Cysteine persulfide intermediate. Residues 308 to 309 form an interaction with tRNA region; sequence RY.

This sequence belongs to the MnmA/TRMU family.

The protein localises to the cytoplasm. It catalyses the reaction S-sulfanyl-L-cysteinyl-[protein] + uridine(34) in tRNA + AH2 + ATP = 2-thiouridine(34) in tRNA + L-cysteinyl-[protein] + A + AMP + diphosphate + H(+). In terms of biological role, catalyzes the 2-thiolation of uridine at the wobble position (U34) of tRNA, leading to the formation of s(2)U34. The sequence is that of tRNA-specific 2-thiouridylase MnmA from Bacillus mycoides (strain KBAB4) (Bacillus weihenstephanensis).